A 663-amino-acid polypeptide reads, in one-letter code: MLDIGVIGRLKFATAFMAMSLLLVPAAEAQEQPVWHYGLSLVDDLKYPPGFKKFDYVNPEAPKGGDLRLSQTGTFDTFNPLLVKGETAVGLDFVFDTLMKPSEDEISTAYGLLAEGVSFPDDISSATFRLRQEAKWADGKPVTPEDVVFSFDKAKELNPLYQSYYRHVVKAEKTGDRDVTFHFDDKNNHELPHILGQIRIVPKHWWEGTGPDGKPRDISRTTLEPVMGSGPYRIASFAPGGTIRYERRPDYWGVALNVNVGQNNFDSITYSFFGDRDVEFEAFRSGNTDYWRENQAMRWATAFDFPAVKDGRVKREEIPNPFRATAVMQAMVPNMRRKPFDDERVRQALNYALDFEELNRTIFYNQYQRVNSFFFATELASSGLPEGKELKNLNEVKDLVPPEVFTTPYSNPVGGTPQKARENLRKAIELLNKAGFELNGNRMVNTETGKPFSFEIMLSSPSFERVALPYAQNLKRIGIEARVRTVDPSQYTNRKRAFDYDVTWEVWGQSLSPGNEQADYWGSAAATRQGSRNYAGISDPGVDALIERVIFAKDRETLVAATKALDRVLLAHNYVIPLYYKLAAQIAYWDALARPKELPKYGLGFPEVWWSKSAACHLPAGVRCSCICGSSGEAGRHQFTPDRRLIRNAQLLDQICAASEFKG.

An N-terminal signal peptide occupies residues Met1–Ala29.

This sequence belongs to the bacterial solute-binding protein 5 family.

It is found in the periplasm. Its function is as follows. Possible binding-protein with either a transport or enzymatic activity. This is an uncharacterized protein from Sinorhizobium fredii (strain NBRC 101917 / NGR234).